Consider the following 1902-residue polypeptide: PII-type proteinase (1902 aa).

The first 33 residues, 1 to 33, serve as a signal peptide directing secretion; that stretch reads MQRKKKGLSILLAGTVALGALAVLPVGEIQAKA. The propeptide occupies 34–187; sequence AISQQTKGSS…VTLAKVYYPT (154 aa). Residues 191-697 form the Peptidase S8 domain; sequence ANSMANVQAV…AGLVDVKAAI (507 aa). Active-site charge relay system residues include D217, H281, and S620. The disordered stretch occupies residues 1796–1874; that stretch reads GKGDGTTGTS…GALPKTGETT (79 aa). Positions 1797–1812 are enriched in gly residues; sequence KGDGTTGTSDKGGGQG. Polar residues predominate over residues 1830–1843; it reads SQPSSGGNIPTNPA. Positions 1867 to 1871 match the LPXTG sorting signal motif; sequence LPKTG. T1870 carries the post-translational modification Pentaglycyl murein peptidoglycan amidated threonine. Residues 1871-1902 constitute a propeptide, removed by sortase; that stretch reads GETTERPAFGFLGVIVVSLMGVLGLKRKQREE.

Belongs to the peptidase S8 family.

It is found in the secreted. Its subcellular location is the cell wall. The enzyme catalyses Endopeptidase activity with very broad specificity, although some subsite preference have been noted, e.g. large hydrophobic residues in the P1 and P4 positions, and Pro in the P2 position. Best known for its action on caseins, although it has been shown to hydrolyze hemoglobin and oxidized insulin B-chain.. Functionally, protease which breaks down milk proteins during the growth of the bacteria on milk. The polypeptide is PII-type proteinase (prt) (Lactococcus lactis subsp. cremoris (Streptococcus cremoris)).